The chain runs to 699 residues: Ubiquitin-like modifier-activating enzyme atg7 (699 aa).

Residues 370–375 carry the GXGXXG motif motif; the sequence is GAGTLG. The Glycyl thioester intermediate role is filled by C550. Positions 680–699 are disordered; it reads MQWSEDEEGMDEEEGEGELI. Positions 682 to 699 are enriched in acidic residues; the sequence is WSEDEEGMDEEEGEGELI.

This sequence belongs to the ATG7 family. Homodimer.

Its subcellular location is the cytoplasm. The protein localises to the preautophagosomal structure. E1-like activating enzyme involved in the 2 ubiquitin-like systems required for cytoplasm to vacuole transport (Cvt) and autophagy. Activates atg12 for its conjugation with apg-4/atg5 and apg-6/atg8 for its conjugation with phosphatidylethanolamine. Both systems are needed for the apg-6/atg8 association to Cvt vesicles and autophagosomes membranes. Autophagy is essential for maintenance of amino acid levels and protein synthesis under nitrogen starvation. Required for selective autophagic degradation of the nucleus (nucleophagy) as well as for mitophagy which contributes to regulate mitochondrial quantity and quality by eliminating the mitochondria to a basal level to fulfill cellular energy requirements and preventing excess ROS production. Plays a role in the regulation of filamentous growth and chronological longevity. The sequence is that of Ubiquitin-like modifier-activating enzyme atg7 (apg-5) from Neurospora crassa (strain ATCC 24698 / 74-OR23-1A / CBS 708.71 / DSM 1257 / FGSC 987).